The following is a 1062-amino-acid chain: Roc-COR-CHAT protease (1062 aa).

LRR repeat units lie at residues 70-94, 95-116, 115-141, 142-159, 160-180, 181-203, 204-226, and 228-249; these read LAGL…HLQQ, LRLL…GSMP, MPLL…ALQK, LDVS…SACP, ALWW…MPAG, FKAL…NGKL, PKLV…LLLP, and GLET…IRGS. Positions 470–660 constitute a COR domain; the sequence is DWLGVMEELQ…GLMWKDNVVF (191 aa). Residues 836 to 856 are disordered; the sequence is ERDNDHTGLSDSSDQEDETFT. Active-site residues include His931 and Cys980.

A dedicated protease for substrate gasdermin bGSDM; cleaves the bGSDM precursor, releasing the pore-forming moiety, which integrates into the membrane and triggers cell death. Probably involved in defense against bacteriophages. Expression of bGSDM and this neighboring protease is highly toxic in E.coli. This chain is Roc-COR-CHAT protease, found in Unknown prokaryotic organism.